The chain runs to 714 residues: Penicillin-binding protein 1F (714 aa).

Topologically, residues 1-12 (MFKIKKKKLFIP) are cytoplasmic. The chain crosses the membrane as a helical; Signal-anchor for type II membrane protein span at residues 13-33 (IIILVLTAFLALIGYISIIFL). The Extracellular portion of the chain corresponds to 34–714 (GHYVIDEKKL…DYVQPKLFSS (681 aa)). Residues 49–217 (SKIVDQNGDE…STYSPILHPD (169 aa)) form a transglycosylase region. The Proton donor; for transglycosylase activity role is filled by E87. Residues 297-592 (SKLQKTAYQV…SSYPTRLFKD (296 aa)) are transpeptidase. S359 (acyl-ester intermediate; for transpeptidase activity) is an active-site residue.

In the N-terminal section; belongs to the glycosyltransferase 51 family. This sequence in the C-terminal section; belongs to the transpeptidase family.

It localises to the cell membrane. It carries out the reaction [GlcNAc-(1-&gt;4)-Mur2Ac(oyl-L-Ala-gamma-D-Glu-L-Lys-D-Ala-D-Ala)](n)-di-trans,octa-cis-undecaprenyl diphosphate + beta-D-GlcNAc-(1-&gt;4)-Mur2Ac(oyl-L-Ala-gamma-D-Glu-L-Lys-D-Ala-D-Ala)-di-trans,octa-cis-undecaprenyl diphosphate = [GlcNAc-(1-&gt;4)-Mur2Ac(oyl-L-Ala-gamma-D-Glu-L-Lys-D-Ala-D-Ala)](n+1)-di-trans,octa-cis-undecaprenyl diphosphate + di-trans,octa-cis-undecaprenyl diphosphate + H(+). It catalyses the reaction Preferential cleavage: (Ac)2-L-Lys-D-Ala-|-D-Ala. Also transpeptidation of peptidyl-alanyl moieties that are N-acyl substituents of D-alanine.. The protein operates within cell wall biogenesis; peptidoglycan biosynthesis. Functionally, cell wall formation. May be involved in outgrowth of the germinated spore or it could function in the synthesis of the germ cell wall. The chain is Penicillin-binding protein 1F (pbpF) from Bacillus subtilis (strain 168).